Reading from the N-terminus, the 216-residue chain is Phosphoenolpyruvate guanylyltransferase (216 aa).

Phosphoenolpyruvate contacts are provided by Thr139, Gly155, and Ser158.

The protein belongs to the CofC family.

It catalyses the reaction phosphoenolpyruvate + GTP + H(+) = enolpyruvoyl-2-diphospho-5'-guanosine + diphosphate. The protein operates within cofactor biosynthesis; coenzyme F420 biosynthesis. Guanylyltransferase that catalyzes the activation of phosphoenolpyruvate (PEP) as enolpyruvoyl-2-diphospho-5'-guanosine, via the condensation of PEP with GTP. It is involved in the biosynthesis of coenzyme F420, a hydride carrier cofactor. The polypeptide is Phosphoenolpyruvate guanylyltransferase (Streptomyces avermitilis (strain ATCC 31267 / DSM 46492 / JCM 5070 / NBRC 14893 / NCIMB 12804 / NRRL 8165 / MA-4680)).